Reading from the N-terminus, the 360-residue chain is Phosphoserine aminotransferase (360 aa).

Position 41 (R41) interacts with L-glutamate. Pyridoxal 5'-phosphate contacts are provided by residues 75–76 (AS), W99, T152, D171, and Q194. K195 is modified (N6-(pyridoxal phosphate)lysine). 236-237 (NT) contacts pyridoxal 5'-phosphate.

It belongs to the class-V pyridoxal-phosphate-dependent aminotransferase family. SerC subfamily. In terms of assembly, homodimer. It depends on pyridoxal 5'-phosphate as a cofactor.

It localises to the cytoplasm. The enzyme catalyses O-phospho-L-serine + 2-oxoglutarate = 3-phosphooxypyruvate + L-glutamate. It carries out the reaction 4-(phosphooxy)-L-threonine + 2-oxoglutarate = (R)-3-hydroxy-2-oxo-4-phosphooxybutanoate + L-glutamate. It functions in the pathway amino-acid biosynthesis; L-serine biosynthesis; L-serine from 3-phospho-D-glycerate: step 2/3. The protein operates within cofactor biosynthesis; pyridoxine 5'-phosphate biosynthesis; pyridoxine 5'-phosphate from D-erythrose 4-phosphate: step 3/5. Its function is as follows. Catalyzes the reversible conversion of 3-phosphohydroxypyruvate to phosphoserine and of 3-hydroxy-2-oxo-4-phosphonooxybutanoate to phosphohydroxythreonine. The sequence is that of Phosphoserine aminotransferase from Porphyromonas gingivalis (strain ATCC 33277 / DSM 20709 / CIP 103683 / JCM 12257 / NCTC 11834 / 2561).